Reading from the N-terminus, the 194-residue chain is ATP-dependent Clp protease proteolytic subunit (194 aa).

S98 functions as the Nucleophile in the catalytic mechanism. Residue H123 is part of the active site.

This sequence belongs to the peptidase S14 family. As to quaternary structure, fourteen ClpP subunits assemble into 2 heptameric rings which stack back to back to give a disk-like structure with a central cavity, resembling the structure of eukaryotic proteasomes.

It is found in the cytoplasm. The enzyme catalyses Hydrolysis of proteins to small peptides in the presence of ATP and magnesium. alpha-casein is the usual test substrate. In the absence of ATP, only oligopeptides shorter than five residues are hydrolyzed (such as succinyl-Leu-Tyr-|-NHMec, and Leu-Tyr-Leu-|-Tyr-Trp, in which cleavage of the -Tyr-|-Leu- and -Tyr-|-Trp bonds also occurs).. Its function is as follows. Cleaves peptides in various proteins in a process that requires ATP hydrolysis. Has a chymotrypsin-like activity. Plays a major role in the degradation of misfolded proteins. The chain is ATP-dependent Clp protease proteolytic subunit from Sodalis glossinidius (strain morsitans).